A 110-amino-acid chain; its full sequence is Histone H2A.1 (110 aa).

The protein belongs to the histone H2A family. As to quaternary structure, the nucleosome is a histone octamer containing two molecules each of H2A, H2B, H3 and H4 assembled in one H3-H4 heterotetramer and two H2A-H2B heterodimers. The octamer wraps approximately 147 bp of DNA. In terms of tissue distribution, expressed in the generative cell within the bicellular pollen. Not detected in other reproductive or vegetative tissues.

It is found in the nucleus. The protein resides in the chromosome. Core component of nucleosome. Nucleosomes wrap and compact DNA into chromatin, limiting DNA accessibility to the cellular machineries which require DNA as a template. Histones thereby play a central role in transcription regulation, DNA repair, DNA replication and chromosomal stability. DNA accessibility is regulated via a complex set of post-translational modifications of histones, also called histone code, and nucleosome remodeling. This Lilium longiflorum (Trumpet lily) protein is Histone H2A.1 (gcH2A).